The following is a 361-amino-acid chain: MSKRIYNFNPGPAALPLSVLEEIQATFLDFAGTGMSITEVSHRSKPFDAIINDAVTRVKRLLGIGDDFKVLFVQGGASMQFAMVPMNLLPDGKSADYVNTGTWSTKAIKETKILGKTVNVAASSEDRNFAYIPKELSLDPNAAYVHITSNNTIKGTQWADFPDTKGVPIVSDMSSDILSRPLDMSKFGLIYAGAQKNIGPAGVCMVIVKNDLLEKANTGLPSMLAYKTYADSNSLYNTPPCFTIYAIDLVLKWLEETIGGLEKMDAVNREKAALLYDLFDASSFYNGTADADSRSLMNVTFRLPSEDLEKRFVEEATKNDLGGLKGHRSVGGCRASIYNAMSMEGIQALVDFMKEFERTNG.

Residue Arg-43 coordinates L-glutamate. Pyridoxal 5'-phosphate-binding positions include 77 to 78, Trp-103, Thr-152, Asp-172, and Gln-195; that span reads AS. An N6-(pyridoxal phosphate)lysine modification is found at Lys-196. 237-238 is a pyridoxal 5'-phosphate binding site; it reads NT.

This sequence belongs to the class-V pyridoxal-phosphate-dependent aminotransferase family. SerC subfamily. In terms of assembly, homodimer. It depends on pyridoxal 5'-phosphate as a cofactor.

The protein localises to the cytoplasm. It catalyses the reaction O-phospho-L-serine + 2-oxoglutarate = 3-phosphooxypyruvate + L-glutamate. The catalysed reaction is 4-(phosphooxy)-L-threonine + 2-oxoglutarate = (R)-3-hydroxy-2-oxo-4-phosphooxybutanoate + L-glutamate. It functions in the pathway amino-acid biosynthesis; L-serine biosynthesis; L-serine from 3-phospho-D-glycerate: step 2/3. The protein operates within cofactor biosynthesis; pyridoxine 5'-phosphate biosynthesis; pyridoxine 5'-phosphate from D-erythrose 4-phosphate: step 3/5. In terms of biological role, catalyzes the reversible conversion of 3-phosphohydroxypyruvate to phosphoserine and of 3-hydroxy-2-oxo-4-phosphonooxybutanoate to phosphohydroxythreonine. The chain is Phosphoserine aminotransferase from Desulfosudis oleivorans (strain DSM 6200 / JCM 39069 / Hxd3) (Desulfococcus oleovorans).